The primary structure comprises 360 residues: Peptide chain release factor 1 (360 aa).

Q235 is subject to N5-methylglutamine. The segment covering 284–293 (HKRQQEEAST) has biased composition (basic and acidic residues). The segment at 284–305 (HKRQQEEASTRRNLLGSGDRSD) is disordered.

Belongs to the prokaryotic/mitochondrial release factor family. Methylated by PrmC. Methylation increases the termination efficiency of RF1.

It is found in the cytoplasm. Functionally, peptide chain release factor 1 directs the termination of translation in response to the peptide chain termination codons UAG and UAA. In Pectobacterium atrosepticum (strain SCRI 1043 / ATCC BAA-672) (Erwinia carotovora subsp. atroseptica), this protein is Peptide chain release factor 1.